The sequence spans 211 residues: Nucleoside triphosphate pyrophosphatase (211 aa).

The Proton acceptor role is filled by aspartate 78.

Belongs to the Maf family. It depends on a divalent metal cation as a cofactor.

The protein resides in the cytoplasm. The enzyme catalyses a ribonucleoside 5'-triphosphate + H2O = a ribonucleoside 5'-phosphate + diphosphate + H(+). It carries out the reaction a 2'-deoxyribonucleoside 5'-triphosphate + H2O = a 2'-deoxyribonucleoside 5'-phosphate + diphosphate + H(+). Its function is as follows. Nucleoside triphosphate pyrophosphatase. May have a dual role in cell division arrest and in preventing the incorporation of modified nucleotides into cellular nucleic acids. The sequence is that of Nucleoside triphosphate pyrophosphatase from Mycolicibacterium smegmatis (strain ATCC 700084 / mc(2)155) (Mycobacterium smegmatis).